Here is a 226-residue protein sequence, read N- to C-terminus: ATP synthase F(0) complex subunit a (226 aa).

6 helical membrane passes run phenylalanine 6–phenylalanine 26, tryptophan 68–leucine 88, glutamine 97–phenylalanine 117, isoleucine 138–valine 158, isoleucine 164–isoleucine 184, and threonine 189–isoleucine 209.

This sequence belongs to the ATPase A chain family. Component of the ATP synthase complex composed at least of ATP5F1A/subunit alpha, ATP5F1B/subunit beta, ATP5MC1/subunit c (homooctomer), MT-ATP6/subunit a, MT-ATP8/subunit 8, ATP5ME/subunit e, ATP5MF/subunit f, ATP5MG/subunit g, ATP5MK/subunit k, ATP5MJ/subunit j, ATP5F1C/subunit gamma, ATP5F1D/subunit delta, ATP5F1E/subunit epsilon, ATP5PF/subunit F6, ATP5PB/subunit b, ATP5PD/subunit d, ATP5PO/subunit OSCP. ATP synthase complex consists of a soluble F(1) head domain (subunits alpha(3) and beta(3)) - the catalytic core - and a membrane F(0) domain - the membrane proton channel (subunits c, a, 8, e, f, g, k and j). These two domains are linked by a central stalk (subunits gamma, delta, and epsilon) rotating inside the F1 region and a stationary peripheral stalk (subunits F6, b, d, and OSCP). Interacts with DNAJC30; interaction is direct.

It localises to the mitochondrion inner membrane. It carries out the reaction H(+)(in) = H(+)(out). Functionally, subunit a, of the mitochondrial membrane ATP synthase complex (F(1)F(0) ATP synthase or Complex V) that produces ATP from ADP in the presence of a proton gradient across the membrane which is generated by electron transport complexes of the respiratory chain. ATP synthase complex consist of a soluble F(1) head domain - the catalytic core - and a membrane F(1) domain - the membrane proton channel. These two domains are linked by a central stalk rotating inside the F(1) region and a stationary peripheral stalk. During catalysis, ATP synthesis in the catalytic domain of F(1) is coupled via a rotary mechanism of the central stalk subunits to proton translocation. With the subunit c (ATP5MC1), forms the proton-conducting channel in the F(0) domain, that contains two crucial half-channels (inlet and outlet) that facilitate proton movement from the mitochondrial intermembrane space (IMS) into the matrix. Protons are taken up via the inlet half-channel and released through the outlet half-channel, following a Grotthuss mechanism. In Pan paniscus (Pygmy chimpanzee), this protein is ATP synthase F(0) complex subunit a.